Reading from the N-terminus, the 147-residue chain is Sulfur acceptor protein CsdE (147 aa).

Cys-61 acts as the Cysteine persulfide intermediate in catalysis. Cys-61 bears the Cysteine persulfide mark.

Belongs to the SufE family. In terms of assembly, homodimer. Forms a heterodimer with CsdA. Interacts with CsdA and with TcdA/CsdL.

Functionally, stimulates the cysteine desulfurase activity of CsdA. Contains a cysteine residue (Cys-61) that acts to accept sulfur liberated via the desulfurase activity of CsdA. May be able to transfer sulfur to TcdA/CsdL. Seems to support the function of TcdA in the generation of cyclic threonylcarbamoyladenosine at position 37 (ct(6)A37) in tRNAs that read codons beginning with adenine. Does not appear to participate in Fe/S biogenesis. The protein is Sulfur acceptor protein CsdE (csdE) of Escherichia coli (strain K12).